Here is a 711-residue protein sequence, read N- to C-terminus: Ribosomal RNA large subunit methyltransferase K/L (711 aa).

One can recognise a THUMP domain in the interval 42-153 (DAQRAVLWSR…KGRATISVDL (112 aa)).

It belongs to the methyltransferase superfamily. RlmKL family.

It localises to the cytoplasm. The catalysed reaction is guanosine(2445) in 23S rRNA + S-adenosyl-L-methionine = N(2)-methylguanosine(2445) in 23S rRNA + S-adenosyl-L-homocysteine + H(+). It carries out the reaction guanosine(2069) in 23S rRNA + S-adenosyl-L-methionine = N(2)-methylguanosine(2069) in 23S rRNA + S-adenosyl-L-homocysteine + H(+). In terms of biological role, specifically methylates the guanine in position 2445 (m2G2445) and the guanine in position 2069 (m7G2069) of 23S rRNA. The protein is Ribosomal RNA large subunit methyltransferase K/L of Xanthomonas oryzae pv. oryzae (strain KACC10331 / KXO85).